The primary structure comprises 230 residues: uncharacterized protein (230 aa).

A helical transmembrane segment spans residues 7–23 (LFTASILSLGYLVFICG). The segment at 27–230 (KPKPTASTES…VKTEGTLKKN (204 aa)) is disordered. Low complexity predominate over residues 50–59 (AVPQKPAAPA). A compositionally biased stretch (basic and acidic residues) spans 60 to 83 (AEEKAPVDPKDPKSKDVDEAKKPD). The span at 101–112 (KKSKKSEKSKKK) shows a compositional bias: basic residues. Positions 113-173 (KTEEKVMSED…KEKSKDETVP (61 aa)) are enriched in basic and acidic residues. The segment covering 199–210 (ETDEFPTIDEDA) has biased composition (acidic residues). Residues 211-230 (EKTKKTEKKDVKTEGTLKKN) show a composition bias toward basic and acidic residues.

The protein localises to the membrane. This is an uncharacterized protein from Caenorhabditis elegans.